The chain runs to 812 residues: Phospholipase D alpha 1 (812 aa).

Positions 1 to 130 (MAQILLHGTL…LGGEEIDKWL (130 aa)) constitute a C2 domain. Residue Asp190 participates in Ca(2+) binding. The PLD phosphodiesterase 1 domain maps to 330–368 (TMFTHHQKIVVVDHEMPNQGSQQRRIVSFIGGIDLCDGR). Catalysis depends on residues His335, Lys337, and Asp342. His335 is an a 1,2-diacyl-sn-glycero-3-phosphate binding site. The Ca(2+) site is built by His374 and His408. Residues Gln524 and His663 each coordinate a 1,2-diacyl-sn-glycero-3-phosphate. Positions 658 to 685 (FMIYVHTKMMIVDDEYIIIGSANINQRS) constitute a PLD phosphodiesterase 2 domain. Active-site residues include His663, Lys665, and Asp670. Ca(2+) is bound at residue Glu724.

This sequence belongs to the phospholipase D family. C2-PLD subfamily. In terms of assembly, monomer. Ca(2+) serves as cofactor.

It carries out the reaction a 1,2-diacyl-sn-glycero-3-phosphocholine + H2O = a 1,2-diacyl-sn-glycero-3-phosphate + choline + H(+). Hydrolyzes glycerol-phospholipids at the terminal phosphodiesteric bond. Plays an important role in various cellular processes. This Zea mays (Maize) protein is Phospholipase D alpha 1 (PLD1).